The sequence spans 281 residues: NAD kinase (281 aa).

Asp-61 (proton acceptor) is an active-site residue. NAD(+) contacts are provided by residues 61–62 (DG), 134–135 (ND), Arg-145, Asp-164, 175–180 (TAYSLS), and Gln-234.

The protein belongs to the NAD kinase family. It depends on a divalent metal cation as a cofactor.

It localises to the cytoplasm. The catalysed reaction is NAD(+) + ATP = ADP + NADP(+) + H(+). Functionally, involved in the regulation of the intracellular balance of NAD and NADP, and is a key enzyme in the biosynthesis of NADP. Catalyzes specifically the phosphorylation on 2'-hydroxyl of the adenosine moiety of NAD to yield NADP. This Clostridium botulinum (strain 657 / Type Ba4) protein is NAD kinase.